Consider the following 222-residue polypeptide: Ethylene-inducing xylanase 2 (222 aa).

A signal peptide spans Met1–Ala19. The region spanning Gln36–Ser222 is the GH11 domain. N-linked (GlcNAc...) asparagine glycosylation is found at Asn38 and Asn94. Glu120 (nucleophile) is an active-site residue. Glu209 acts as the Proton donor in catalysis.

The protein belongs to the glycosyl hydrolase 11 (cellulase G) family.

The catalysed reaction is Endohydrolysis of (1-&gt;4)-beta-D-xylosidic linkages in xylans.. Its pathway is glycan degradation; xylan degradation. Endo-1,4-beta-xylanase involved in the hydrolysis of xylan, a major structural heterogeneous polysaccharide found in plant biomass representing the second most abundant polysaccharide in the biosphere, after cellulose. May act as an elicitor of plant defense responses in certain plants but does not exhibit any cell death when transiently expressed in N.benthamiana. The polypeptide is Ethylene-inducing xylanase 2 (Botryotinia fuckeliana (strain B05.10) (Noble rot fungus)).